The chain runs to 396 residues: Ornithine aminotransferase (396 aa).

Residue lysine 255 is modified to N6-(pyridoxal phosphate)lysine.

The protein belongs to the class-III pyridoxal-phosphate-dependent aminotransferase family. OAT subfamily. Pyridoxal 5'-phosphate serves as cofactor.

It is found in the cytoplasm. The catalysed reaction is a 2-oxocarboxylate + L-ornithine = L-glutamate 5-semialdehyde + an L-alpha-amino acid. It participates in amino-acid biosynthesis; L-proline biosynthesis; L-glutamate 5-semialdehyde from L-ornithine: step 1/1. Functionally, catalyzes the interconversion of ornithine to glutamate semialdehyde. The sequence is that of Ornithine aminotransferase from Staphylococcus epidermidis (strain ATCC 35984 / DSM 28319 / BCRC 17069 / CCUG 31568 / BM 3577 / RP62A).